Consider the following 2609-residue polypeptide: Beige protein homolog 1 (2609 aa).

Disordered stretches follow at residues 1654–1679 and 1691–1729; these read DSKLEARSSGARRNRSFDTSVEAPVS and ILPSQEETLHDAARSDSNNSMEDEEDDVDEEDKEDKNRT. Positions 1711–1723 are enriched in acidic residues; the sequence is MEDEEDDVDEEDK. Residues 1735-1870 form the BEACH-type PH domain; it reads ESGDSIQDVY…NRDSLYQKLV (136 aa). One can recognise a BEACH domain in the interval 1907–2202; the sequence is ANALSFSTTH…QVFKKPHPQR (296 aa). WD repeat units lie at residues 2249–2290, 2294–2332, 2340–2379, 2429–2475, and 2507–2546; these read KDEV…QPVM, LHSEKITHVVACDERTFLTASLDLTLRLWTLSTNKPIKA, GHRYRITCVTVCKAFSIIVSGDAGGNLIIWDLNRAEFVSS, NSDE…NAKL, and ATRQNIITITPNGQARGIFAGDDKGQVFSWMLPDTTSNVH. The FYVE-type zinc-finger motif lies at 2550-2604; it reads DNTSELCSLCDSRFSLMEWRSQCRACGNSNVCSDCVSMLKDTNIKTCYECYRQMP.

Its subcellular location is the cytoplasm. The protein resides in the membrane. Its function is as follows. May be involved in protein sorting and cell wall formation. The polypeptide is Beige protein homolog 1 (lvs1) (Schizosaccharomyces pombe (strain 972 / ATCC 24843) (Fission yeast)).